Here is a 210-residue protein sequence, read N- to C-terminus: 3-demethoxyubiquinol 3-hydroxylase (210 aa).

Fe cation is bound by residues Glu59, Glu89, His92, Glu141, Glu173, and His176.

The protein belongs to the COQ7 family. Requires Fe cation as cofactor.

It localises to the cell membrane. The enzyme catalyses a 5-methoxy-2-methyl-3-(all-trans-polyprenyl)benzene-1,4-diol + AH2 + O2 = a 3-demethylubiquinol + A + H2O. It functions in the pathway cofactor biosynthesis; ubiquinone biosynthesis. Its function is as follows. Catalyzes the hydroxylation of 2-nonaprenyl-3-methyl-6-methoxy-1,4-benzoquinol during ubiquinone biosynthesis. The chain is 3-demethoxyubiquinol 3-hydroxylase from Marinomonas sp. (strain MWYL1).